A 740-amino-acid chain; its full sequence is NAD(P)H-quinone oxidoreductase subunit 5, chloroplastic (740 aa).

A run of 16 helical transmembrane segments spans residues tryptophan 9–phenylalanine 29, tryptophan 40–isoleucine 60, isoleucine 89–isoleucine 109, phenylalanine 125–isoleucine 145, isoleucine 147–threonine 167, glycine 185–phenylalanine 205, valine 221–serine 241, threonine 258–alanine 278, leucine 283–leucine 303, leucine 327–isoleucine 347, alanine 354–serine 374, threonine 396–serine 416, leucine 425–tyrosine 445, isoleucine 547–proline 567, phenylalanine 606–tyrosine 626, and isoleucine 718–isoleucine 738.

The protein belongs to the complex I subunit 5 family. As to quaternary structure, NDH is composed of at least 16 different subunits, 5 of which are encoded in the nucleus.

The protein resides in the plastid. It localises to the chloroplast thylakoid membrane. The catalysed reaction is a plastoquinone + NADH + (n+1) H(+)(in) = a plastoquinol + NAD(+) + n H(+)(out). The enzyme catalyses a plastoquinone + NADPH + (n+1) H(+)(in) = a plastoquinol + NADP(+) + n H(+)(out). Functionally, NDH shuttles electrons from NAD(P)H:plastoquinone, via FMN and iron-sulfur (Fe-S) centers, to quinones in the photosynthetic chain and possibly in a chloroplast respiratory chain. The immediate electron acceptor for the enzyme in this species is believed to be plastoquinone. Couples the redox reaction to proton translocation, and thus conserves the redox energy in a proton gradient. In Aethionema cordifolium (Lebanon stonecress), this protein is NAD(P)H-quinone oxidoreductase subunit 5, chloroplastic (ndhF).